Reading from the N-terminus, the 141-residue chain is Hemoglobin subunit alpha (141 aa).

In terms of domain architecture, Globin spans 1–141 (VLSPADKTNV…VSTVLTSKYR (141 aa)). Serine 3 is modified (phosphoserine). Lysine 7 carries the post-translational modification N6-succinyllysine. Threonine 8 carries the phosphothreonine modification. Lysine 11 is modified (N6-succinyllysine). Lysine 16 carries the N6-acetyllysine; alternate modification. The residue at position 16 (lysine 16) is an N6-succinyllysine; alternate. Tyrosine 24 bears the Phosphotyrosine mark. Serine 35 bears the Phosphoserine mark. Residue lysine 40 is modified to N6-succinyllysine. Serine 49 carries the post-translational modification Phosphoserine. Histidine 58 serves as a coordination point for O2. Histidine 87 is a binding site for heme b. Residue serine 102 is modified to Phosphoserine. Residue threonine 108 is modified to Phosphothreonine. 2 positions are modified to phosphoserine: serine 124 and serine 131. Phosphothreonine is present on residues threonine 134 and threonine 137. Phosphoserine is present on serine 138.

Belongs to the globin family. Heterotetramer of two alpha chains and two beta chains. As to expression, red blood cells.

Functionally, involved in oxygen transport from the lung to the various peripheral tissues. Hemopressin acts as an antagonist peptide of the cannabinoid receptor CNR1. Hemopressin-binding efficiently blocks cannabinoid receptor CNR1 and subsequent signaling. In Gorilla gorilla gorilla (Western lowland gorilla), this protein is Hemoglobin subunit alpha (HBA).